The following is a 243-amino-acid chain: Phosphatidylserine decarboxylase proenzyme (243 aa).

Catalysis depends on S212, which acts as the Schiff-base intermediate with substrate; via pyruvic acid. A Pyruvic acid (Ser); by autocatalysis modification is found at S212.

It belongs to the phosphatidylserine decarboxylase family. PSD-A subfamily. In terms of assembly, heterodimer of a large membrane-associated beta subunit and a small pyruvoyl-containing alpha subunit. Pyruvate is required as a cofactor. Post-translationally, is synthesized initially as an inactive proenzyme. Formation of the active enzyme involves a self-maturation process in which the active site pyruvoyl group is generated from an internal serine residue via an autocatalytic post-translational modification. Two non-identical subunits are generated from the proenzyme in this reaction, and the pyruvate is formed at the N-terminus of the alpha chain, which is derived from the carboxyl end of the proenzyme. The post-translation cleavage follows an unusual pathway, termed non-hydrolytic serinolysis, in which the side chain hydroxyl group of the serine supplies its oxygen atom to form the C-terminus of the beta chain, while the remainder of the serine residue undergoes an oxidative deamination to produce ammonia and the pyruvoyl prosthetic group on the alpha chain.

It localises to the cell membrane. The enzyme catalyses a 1,2-diacyl-sn-glycero-3-phospho-L-serine + H(+) = a 1,2-diacyl-sn-glycero-3-phosphoethanolamine + CO2. Its pathway is phospholipid metabolism; phosphatidylethanolamine biosynthesis; phosphatidylethanolamine from CDP-diacylglycerol: step 2/2. In terms of biological role, catalyzes the formation of phosphatidylethanolamine (PtdEtn) from phosphatidylserine (PtdSer). The protein is Phosphatidylserine decarboxylase proenzyme of Mycobacterium leprae (strain Br4923).